The primary structure comprises 442 residues: Putative mannan endo-1,6-alpha-mannosidase C1198.07c (442 aa).

The N-terminal stretch at 1–19 (MRYLSFFFEFFFLFSFAFA) is a signal peptide. Residues 20-421 (FDFDVTSDDS…TPATKSDKGW (402 aa)) lie on the Lumenal side of the membrane. 7 N-linked (GlcNAc...) asparagine glycosylation sites follow: N75, N124, N193, N229, N254, N257, and N356. Residues 422–442 (AGFLTFAFSFVFLLFSIWLYF) traverse the membrane as a helical segment.

Belongs to the glycosyl hydrolase 76 family.

The protein resides in the endoplasmic reticulum membrane. The enzyme catalyses Random hydrolysis of (1-&gt;6)-alpha-D-mannosidic linkages in unbranched (1-&gt;6)-mannans.. This is Putative mannan endo-1,6-alpha-mannosidase C1198.07c from Schizosaccharomyces pombe (strain 972 / ATCC 24843) (Fission yeast).